Reading from the N-terminus, the 96-residue chain is Co-chaperonin GroES (96 aa).

The protein belongs to the GroES chaperonin family. Heptamer of 7 subunits arranged in a ring. Interacts with the chaperonin GroEL.

The protein resides in the cytoplasm. Its function is as follows. Together with the chaperonin GroEL, plays an essential role in assisting protein folding. The GroEL-GroES system forms a nano-cage that allows encapsulation of the non-native substrate proteins and provides a physical environment optimized to promote and accelerate protein folding. GroES binds to the apical surface of the GroEL ring, thereby capping the opening of the GroEL channel. This Albidiferax ferrireducens (strain ATCC BAA-621 / DSM 15236 / T118) (Rhodoferax ferrireducens) protein is Co-chaperonin GroES.